Reading from the N-terminus, the 445-residue chain is Fibrinogen gamma chain (445 aa).

An N-terminal signal peptide occupies residues Met-1 to Ala-25. N-linked (GlcNAc...) asparagine glycosylation is present at Asn-78. A Fibrinogen C-terminal domain is found at Arg-170–Asn-416. Residues Cys-179 and Cys-208 are joined by a disulfide bond. The Ca(2+) site is built by Asp-344, Asp-346, and Gly-350. Cys-352 and Cys-365 are disulfide-bonded. The gamma-chain polymerization, binding amino end of another fibrin alpha chain stretch occupies residues Thr-400–Asp-422. Gln-424 is covalently cross-linked (Isoglutamyl lysine isopeptide (Gln-Lys) (interchain with K-432)). A disordered region spans residues Gln-424 to Pro-445. Position 431 is a phosphoserine (Ser-431). Lys-432 participates in a covalent cross-link: Isoglutamyl lysine isopeptide (Lys-Gln) (interchain with Q-424). Residues Ser-435 to Pro-445 show a composition bias toward basic and acidic residues.

As to quaternary structure, heterohexamer; disulfide linked. Contains 2 sets of 3 non-identical chains (alpha, beta and gamma). The 2 heterotrimers are in head to head conformation with the N-termini in a small central domain. Conversion of fibrinogen to fibrin is triggered by thrombin, which cleaves fibrinopeptides A and B from alpha and beta chains, and thus exposes the N-terminal polymerization sites responsible for the formation of the soft clot. The soft clot is converted into the hard clot by factor XIIIA which catalyzes the epsilon-(gamma-glutamyl)lysine cross-linking between gamma chains (stronger) and between alpha chains (weaker) of different monomers.

Its subcellular location is the secreted. Functionally, together with fibrinogen alpha (FGA) and fibrinogen beta (FGB), polymerizes to form an insoluble fibrin matrix. Has a major function in hemostasis as one of the primary components of blood clots. In addition, functions during the early stages of wound repair to stabilize the lesion and guide cell migration during re-epithelialization. Was originally thought to be essential for platelet aggregation, based on in vitro studies using anticoagulated blood. However, subsequent studies have shown that it is not absolutely required for thrombus formation in vivo. Enhances expression of SELP in activated platelets via an ITGB3-dependent pathway. Maternal fibrinogen is essential for successful pregnancy. Fibrin deposition is also associated with infection, where it protects against IFNG-mediated hemorrhage. May also facilitate the antibacterial immune response via both innate and T-cell mediated pathways. The sequence is that of Fibrinogen gamma chain (Fgg) from Rattus norvegicus (Rat).